Consider the following 557-residue polypeptide: CDP-diacylglycerol--glycerol-3-phosphate 3-phosphatidyltransferase, mitochondrial (557 aa).

The N-terminal 25 residues, 1 to 25, are a transit peptide targeting the mitochondrion; that stretch reads MAAAGGAALWRRLAAWLPRGPPGLA. 121–128 is an ATP binding site; the sequence is ASLYLGTG. The PLD phosphodiesterase 1 domain maps to 212-238; the sequence is TIGLQHIKVYLFDDNVILSGANLSDLY. Active-site residues include H217, K219, and D224. A disordered region spans residues 322-346; the sequence is TFHSSQQGSSMLPQHDSEASEGLKP. Residues 323 to 333 are compositionally biased toward polar residues; it reads FHSSQQGSSML. Residues 336–346 show a composition bias toward basic and acidic residues; that stretch reads HDSEASEGLKP. The region spanning 461–494 is the PLD phosphodiesterase 2 domain; the sequence is AGWTFHAKGLWLYLAGSSLPCLTLIGSPNFGYRS.

This sequence belongs to the CDP-alcohol phosphatidyltransferase class-II family.

Its subcellular location is the mitochondrion. The enzyme catalyses a CDP-1,2-diacyl-sn-glycerol + sn-glycerol 3-phosphate = a 1,2-diacyl-sn-glycero-3-phospho-(1'-sn-glycero-3'-phosphate) + CMP + H(+). The protein operates within phospholipid metabolism; phosphatidylglycerol biosynthesis; phosphatidylglycerol from CDP-diacylglycerol: step 1/2. Activated by calcium and magnesium and inhibited by other bivalent cations. Its function is as follows. Functions in the biosynthesis of the anionic phospholipids phosphatidylglycerol and cardiolipin. In Gallus gallus (Chicken), this protein is CDP-diacylglycerol--glycerol-3-phosphate 3-phosphatidyltransferase, mitochondrial (PGS1).